A 130-amino-acid chain; its full sequence is Small ribosomal subunit protein uS11 (130 aa).

Belongs to the universal ribosomal protein uS11 family. In terms of assembly, part of the 30S ribosomal subunit. Interacts with proteins S7 and S18. Binds to IF-3.

In terms of biological role, located on the platform of the 30S subunit, it bridges several disparate RNA helices of the 16S rRNA. Forms part of the Shine-Dalgarno cleft in the 70S ribosome. This is Small ribosomal subunit protein uS11 from Lactobacillus helveticus (strain DPC 4571).